The chain runs to 100 residues: NADH-quinone oxidoreductase subunit K (100 aa).

The next 3 helical transmembrane spans lie at 4–24, 29–49, and 60–80; these read YEYY…GIII, IAML…FVAF, and VFVF…LGLI.

This sequence belongs to the complex I subunit 4L family. As to quaternary structure, NDH-1 is composed of 14 different subunits. Subunits NuoA, H, J, K, L, M, N constitute the membrane sector of the complex.

It localises to the cell inner membrane. It carries out the reaction a quinone + NADH + 5 H(+)(in) = a quinol + NAD(+) + 4 H(+)(out). Functionally, NDH-1 shuttles electrons from NADH, via FMN and iron-sulfur (Fe-S) centers, to quinones in the respiratory chain. The immediate electron acceptor for the enzyme in this species is believed to be ubiquinone. Couples the redox reaction to proton translocation (for every two electrons transferred, four hydrogen ions are translocated across the cytoplasmic membrane), and thus conserves the redox energy in a proton gradient. The polypeptide is NADH-quinone oxidoreductase subunit K (Persephonella marina (strain DSM 14350 / EX-H1)).